The following is a 926-amino-acid chain: Isoleucine--tRNA ligase (926 aa).

A 'HIGH' region motif is present at residues 57–67 (PYANGNIHMGH). Position 555 (glutamate 555) interacts with L-isoleucyl-5'-AMP. The 'KMSKS' region motif lies at 596–600 (KMSKS). Position 599 (lysine 599) interacts with ATP. Zn(2+) contacts are provided by cysteine 897, cysteine 900, cysteine 914, and cysteine 917.

The protein belongs to the class-I aminoacyl-tRNA synthetase family. IleS type 1 subfamily. Monomer. Zn(2+) serves as cofactor.

Its subcellular location is the cytoplasm. The catalysed reaction is tRNA(Ile) + L-isoleucine + ATP = L-isoleucyl-tRNA(Ile) + AMP + diphosphate. Functionally, catalyzes the attachment of isoleucine to tRNA(Ile). As IleRS can inadvertently accommodate and process structurally similar amino acids such as valine, to avoid such errors it has two additional distinct tRNA(Ile)-dependent editing activities. One activity is designated as 'pretransfer' editing and involves the hydrolysis of activated Val-AMP. The other activity is designated 'posttransfer' editing and involves deacylation of mischarged Val-tRNA(Ile). The protein is Isoleucine--tRNA ligase of Natranaerobius thermophilus (strain ATCC BAA-1301 / DSM 18059 / JW/NM-WN-LF).